The sequence spans 371 residues: Transmembrane protein 229A (371 aa).

Positions 1–30 (MAGSDVASEGPSPRDGATRRPGATGGLRSQ) are disordered. 6 consecutive transmembrane segments (helical) span residues 51–71 (LPAWMRLYFYGMHGITLDVLV), 117–137 (AFLFNFLLYPSAHVGLQTLAG), 235–255 (FLFFGMHGFLDEIFFTFFFNV), 269–289 (LWSFFMYGSCSFVVEKLYFHL), 301–321 (VPIYVIFIYAWEFSWGLGLRM), and 334–354 (LNFMGLITLMYLPGWLFLSVY).

This sequence belongs to the TMEM229 family.

The protein resides in the membrane. The polypeptide is Transmembrane protein 229A (Tmem229a) (Mus musculus (Mouse)).